Consider the following 148-residue polypeptide: Putative ankyrin repeat protein RF_1158 (148 aa).

Residues 82–115 form an ANK repeat; that stretch reads RPTTALGIAIAQGNSEEVIKYLLANGADPKLAFD.

The polypeptide is Putative ankyrin repeat protein RF_1158 (Rickettsia felis (strain ATCC VR-1525 / URRWXCal2) (Rickettsia azadi)).